Here is a 430-residue protein sequence, read N- to C-terminus: Serine--tRNA ligase (430 aa).

L-serine is bound at residue 237–239; sequence TAE. 268–270 is a binding site for ATP; the sequence is RAE. Glutamate 291 lines the L-serine pocket. 355–358 serves as a coordination point for ATP; sequence EISS. Serine 391 serves as a coordination point for L-serine.

It belongs to the class-II aminoacyl-tRNA synthetase family. Type-1 seryl-tRNA synthetase subfamily. As to quaternary structure, homodimer. The tRNA molecule binds across the dimer.

The protein localises to the cytoplasm. It carries out the reaction tRNA(Ser) + L-serine + ATP = L-seryl-tRNA(Ser) + AMP + diphosphate + H(+). The catalysed reaction is tRNA(Sec) + L-serine + ATP = L-seryl-tRNA(Sec) + AMP + diphosphate + H(+). It participates in aminoacyl-tRNA biosynthesis; selenocysteinyl-tRNA(Sec) biosynthesis; L-seryl-tRNA(Sec) from L-serine and tRNA(Sec): step 1/1. Functionally, catalyzes the attachment of serine to tRNA(Ser). Is also able to aminoacylate tRNA(Sec) with serine, to form the misacylated tRNA L-seryl-tRNA(Sec), which will be further converted into selenocysteinyl-tRNA(Sec). This is Serine--tRNA ligase from Serratia proteamaculans (strain 568).